The primary structure comprises 114 residues: Biofilm growth-associated repressor (114 aa).

In terms of domain architecture, HTH arsR-type spans 17-111 (DMEKRANEVA…ALYTIFCAQE (95 aa)). The H-T-H motif DNA-binding region spans 51 to 74 (VGELEQQIGIGQPTLSQQLGVLRE).

Represses an operon that comprises itself, XF_0764, XF_0765, XF_0766 and blh. Binds to a palindromic AT-rich sequence spanning the -10 region of the blh promoter and blocks transcription of the operon. The chain is Biofilm growth-associated repressor (bigR) from Xylella fastidiosa (strain 9a5c).